Here is a 155-residue protein sequence, read N- to C-terminus: Effector protein PevD1 (155 aa).

Residues 1 to 18 (MQFTLAAAAALFGASALA) form the signal peptide. The AA1-like domain occupies 33–148 (NMYENIDIAD…NPTTIVIDSL (116 aa)). 2 cysteine pairs are disulfide-bonded: Cys70–Cys84 and Cys125–Cys135.

Monomer. Interacts with Arabidopsis thaliana NRP.

The protein resides in the secreted. Effector protein. Elicits a hypersensitive response (HR) in tobacco plants (N.tabacum) and cotton (G.hirsutum). Boosts systemic acquired resistance (SAR) to tobacco mosaic virus (TMV) infection in N.tabacum and to V.dhaliae infection in primed cotton seedlings. The sequence is that of Effector protein PevD1 from Verticillium dahliae (Verticillium wilt).